We begin with the raw amino-acid sequence, 446 residues long: Tubulin alpha-2 chain (446 aa).

The short motif at 1-4 (MREC) is the MREC motif element. The GTP site is built by Q11, E68, S137, G141, T142, S176, N203, and N225. Mg(2+) is bound at residue E68. E251 is an active-site residue.

The protein belongs to the tubulin family. Dimer of alpha and beta chains. A typical microtubule is a hollow water-filled tube with an outer diameter of 25 nm and an inner diameter of 15 nM. Alpha-beta heterodimers associate head-to-tail to form protofilaments running lengthwise along the microtubule wall with the beta-tubulin subunit facing the microtubule plus end conferring a structural polarity. Microtubules usually have 13 protofilaments but different protofilament numbers can be found in some organisms and specialized cells. Requires Mg(2+) as cofactor. Post-translationally, some glutamate residues at the C-terminus are polyglycylated, resulting in polyglycine chains on the gamma-carboxyl group. Glycylation is mainly limited to tubulin incorporated into axonemes (cilia and flagella) whereas glutamylation is prevalent in neuronal cells, centrioles, axonemes, and the mitotic spindle. Both modifications can coexist on the same protein on adjacent residues, and lowering polyglycylation levels increases polyglutamylation, and reciprocally. The precise function of polyglycylation is still unclear. Some glutamate residues at the C-terminus are polyglutamylated, resulting in polyglutamate chains on the gamma-carboxyl group. Polyglutamylation plays a key role in microtubule severing by spastin (SPAST). SPAST preferentially recognizes and acts on microtubules decorated with short polyglutamate tails: severing activity by SPAST increases as the number of glutamates per tubulin rises from one to eight, but decreases beyond this glutamylation threshold. In terms of tissue distribution, testis specific.

It is found in the cytoplasm. The protein localises to the cytoskeleton. It carries out the reaction GTP + H2O = GDP + phosphate + H(+). Its function is as follows. Tubulin is the major constituent of microtubules, a cylinder consisting of laterally associated linear protofilaments composed of alpha- and beta-tubulin heterodimers. Microtubules grow by the addition of GTP-tubulin dimers to the microtubule end, where a stabilizing cap forms. Below the cap, tubulin dimers are in GDP-bound state, owing to GTPase activity of alpha-tubulin. The polypeptide is Tubulin alpha-2 chain (Gallus gallus (Chicken)).